The chain runs to 347 residues: Ultraviolet-sensitive opsin (347 aa).

Residues 1-37 (MSGEEEFYLFKNGSIGGPWDGPQYHIAPPWAFYLQTA) lie on the Extracellular side of the membrane. A glycan (N-linked (GlcNAc...) asparagine) is linked at asparagine 12. The chain crosses the membrane as a helical span at residues 38–58 (FMGFVFMVGTPLNAIVLVVTI). Residues 59–69 (KYKKLRQPLNY) are Cytoplasmic-facing. The chain crosses the membrane as a helical span at residues 70-90 (ILVNISFCGFLACIICIFTVF). Residues 91–106 (VSSSQGYFVFGKHVCA) lie on the Extracellular side of the membrane. Cysteine 105 and cysteine 182 form a disulfide bridge. The chain crosses the membrane as a helical span at residues 107 to 127 (FEGFMGATAGLVTGWSLAFLA). Residues 128 to 147 (FERYIVICKPLGNFRFTAKH) are Cytoplasmic-facing. Residues 148–168 (ALVVVVATWVIGIGVAIPPFF) form a helical membrane-spanning segment. The Extracellular portion of the chain corresponds to 169–197 (GWSRYVPEGLQCSCGPDWYTVGTKYRSEY). A helical transmembrane segment spans residues 198–218 (YTWFLFIFCFIVPLSLIIFSY). Residues 219–247 (SQLLSALRAVAAQQQESATTQKAEREVSR) lie on the Cytoplasmic side of the membrane. Residues 248 to 268 (MVVVMVGSFCVCYVPYAALAM) traverse the membrane as a helical segment. Residues 269–282 (YMVNNREHGIDLRL) lie on the Extracellular side of the membrane. The chain crosses the membrane as a helical span at residues 283-303 (VTIPAFFSKSSCVYNPIIYCF). At lysine 291 the chain carries N6-(retinylidene)lysine. The Cytoplasmic segment spans residues 304-347 (MNKQFRGCIMEMVCGKPMTDDSDMSSSAQRTEVSSVSSSQVSPS). The S-palmitoyl cysteine moiety is linked to residue cysteine 317. A disordered region spans residues 324–347 (DSDMSSSAQRTEVSSVSSSQVSPS). The span at 328–347 (SSSAQRTEVSSVSSSQVSPS) shows a compositional bias: low complexity.

It belongs to the G-protein coupled receptor 1 family. Opsin subfamily. Phosphorylated on some or all of the serine and threonine residues present in the C-terminal region. Cone photoreceptor cells.

The protein localises to the membrane. In terms of biological role, visual pigments are the light-absorbing molecules that mediate vision. They consist of an apoprotein, opsin, covalently linked to cis-retinal. The chain is Ultraviolet-sensitive opsin from Melopsittacus undulatus (Budgerigar).